The following is a 346-amino-acid chain: Eukaryotic translation initiation factor 3 subunit I (346 aa).

WD repeat units follow at residues 8–49, 50–91, 145–184, 189–228, and 286–325; these read GHER…GTYH, GHQG…KTWD, CEDS…LLYN, ELNQ…VLKT, and GHFG…FDFM.

The protein belongs to the eIF-3 subunit I family. In terms of assembly, component of the eukaryotic translation initiation factor 3 (eIF-3) complex.

The protein resides in the cytoplasm. Functionally, component of the eukaryotic translation initiation factor 3 (eIF-3) complex, which is involved in protein synthesis of a specialized repertoire of mRNAs and, together with other initiation factors, stimulates binding of mRNA and methionyl-tRNAi to the 40S ribosome. The eIF-3 complex specifically targets and initiates translation of a subset of mRNAs involved in cell proliferation. The chain is Eukaryotic translation initiation factor 3 subunit I (tif-34) from Neurospora crassa (strain ATCC 24698 / 74-OR23-1A / CBS 708.71 / DSM 1257 / FGSC 987).